A 317-amino-acid chain; its full sequence is MWLYLAAFVGLYYLLHWYRERQVVSHLQDKYVFITGCDSGFGNLLARQLDARGLRVLAACLTEKGAEQLRGQTSDRLETVTLDVTKMESIAAATQWVKEHVGDRGLWGLVNNAGILTPITLCEWLNTEDSMNMLKVNLIGVIQVTLSMLPLVRRARGRIVNVSSILGRVAFFVGGYCVSKYGVEAFSDILRREIQHFGVKISIVEPGYFRTGMTNMTQSLERMKQSWKEAPKHIKETYGQQYFDALYNIMKEGLLNCSTNLNLVTDCMEHALTSVHPRTRYSAGWDAKFFFIPLSYLPTSLADYILTRSWPKPAQAV.

Residues 1–17 (MWLYLAAFVGLYYLLHW) form the signal peptide. Residue 33–57 (FITGCDSGFGNLLARQLDARGLRVL) participates in NAD(+) binding. A glycan (N-linked (GlcNAc...) asparagine) is linked at N161. S164 lines the substrate pocket. The active-site Proton acceptor is the Y176. N-linked (GlcNAc...) asparagine glycans are attached at residues N215 and N256.

The protein belongs to the short-chain dehydrogenases/reductases (SDR) family. In terms of tissue distribution, detected in liver and prostate (at protein level). Detected in adult liver, lung, brain, placenta, prostate, adrenal gland, testis, mammary gland, spleen, spinal cord and uterus. Detected in caudate nucleus, and at lower levels in amygdala, corpus callosum, hippocampus, substantia nigra and thalamus. Detected in fetal lung, liver and brain.

The protein localises to the microsome membrane. It is found in the early endosome membrane. The enzyme catalyses all-trans-retinol--[retinol-binding protein] + NAD(+) = all-trans-retinal--[retinol-binding protein] + NADH + H(+). It carries out the reaction all-trans-retinol + NAD(+) = all-trans-retinal + NADH + H(+). The catalysed reaction is androsterone + NAD(+) = 5alpha-androstan-3,17-dione + NADH + H(+). It catalyses the reaction testosterone + NAD(+) = androst-4-ene-3,17-dione + NADH + H(+). The enzyme catalyses 5alpha-androstane-3alpha,17beta-diol + NAD(+) = 17beta-hydroxy-5alpha-androstan-3-one + NADH + H(+). It carries out the reaction 17beta-estradiol + NAD(+) = estrone + NADH + H(+). The catalysed reaction is 17beta-estradiol + NADP(+) = estrone + NADPH + H(+). It catalyses the reaction 3alpha-hydroxy-5alpha-pregnan-20-one + NAD(+) = 5alpha-pregnane-3,20-dione + NADH + H(+). The enzyme catalyses 5alpha-androstane-3beta,17beta-diol + NAD(+) = 17beta-hydroxy-5alpha-androstan-3-one + NADH + H(+). It carries out the reaction 3beta-hydroxy-5alpha-androstan-17-one + NAD(+) = 5alpha-androstan-3,17-dione + NADH + H(+). Its function is as follows. NAD-dependent oxidoreductase with broad substrate specificity that shows both oxidative and reductive activity (in vitro). Has 17-beta-hydroxysteroid dehydrogenase activity towards various steroids (in vitro). Converts 5-alpha-androstan-3-alpha,17-beta-diol to androsterone and estradiol to estrone (in vitro). Has 3-alpha-hydroxysteroid dehydrogenase activity towards androsterone (in vitro). Has retinol dehydrogenase activity towards all-trans-retinol (in vitro). Can convert androsterone to epi-androsterone. Androsterone is first oxidized to 5-alpha-androstane-3,17-dione and then reduced to epi-andosterone. Can act on both C-19 and C-21 3-alpha-hydroxysteroids. This is 17-beta-hydroxysteroid dehydrogenase type 6 (HSD17B6) from Homo sapiens (Human).